A 239-amino-acid chain; its full sequence is Type III effector protein HopBA1 (239 aa).

Positions Met1–Ser20 are enriched in low complexity. A disordered region spans residues Met1–Pro31.

The protein localises to the secreted. Its subcellular location is the host cell. Virulence factor recognized by the A.thaliana disease resistance protein RBA1, which triggers plant cell death. HopBA1 enhances RBA1 self-association, which is necessary for ectopic autoactivation of host cell death. The protein is Type III effector protein HopBA1 of Pseudomonas syringae pv. aptata.